The primary structure comprises 403 residues: Odorant receptor 43b (403 aa).

At 1-49 (MFGHFKLVYPAPISEPIQSRDSNAYMMETLRNSGLNLKNDFGIGRKIWR) the chain is on the cytoplasmic side. A helical transmembrane segment spans residues 50 to 70 (VFSFTYNMVILPVSFPINYVI). Residues 71–83 (HLAEFPPELLLQS) lie on the Extracellular side of the membrane. A helical transmembrane segment spans residues 84–104 (LQLCLNTWCFALKFFTLIVYT). The Cytoplasmic segment spans residues 105–139 (HRLELANKHFDELDKYCVKPAEKRKVRDMVATITR). Residues 140-160 (LYLTFVVVYVLYATSTLLDGL) form a helical membrane-spanning segment. Residues 161–193 (LHHRVPYNTYYPFINWRVDRTQMYIQSFLEYFT) are Extracellular-facing. A helical membrane pass occupies residues 194–214 (VGYAIYVATATDSYPVIYVAA). The Cytoplasmic portion of the chain corresponds to 215-271 (LRTHILLLKDRIIYLGDPSNEGSSDPSYMFKSLVDCIKAHRTMLNFCDAIQPIISGT). A helical membrane pass occupies residues 272–292 (IFAQFIICGSILGIIMINMVL). Residues 293–299 (FADQSTR) are Extracellular-facing. A helical transmembrane segment spans residues 300-320 (FGIVIYVMAVLLQTFPLCFYC). Over 321–372 (NAIVDDCKELAHALFHSAWWVQDKRYQRTVIQFLQKLQQPMTFTAMNIFNIN) the chain is Cytoplasmic. The chain crosses the membrane as a helical span at residues 373 to 393 (LATNINVAKFAFTVYAIASGM). The Extracellular segment spans residues 394-403 (NLDQKLSIKE).

Belongs to the insect chemoreceptor superfamily. Heteromeric odorant receptor channel (TC 1.A.69) family. Or2a subfamily. Interacts with Orco. Complexes exist early in the endomembrane system in olfactory sensory neurons (OSNs), coupling these complexes to the conserved ciliary trafficking pathway. Expressed in 16 olfactory receptor neurons in a broad area across the antenna, including both anterior and posterior faces and in the maxillary palp. This expression pattern matches the distribution of the small sensilla basiconica. Expression in the antenna is observed late in antennal development at 93 hours APF.

The protein localises to the cell membrane. Its function is as follows. Odorant receptor which mediates acceptance or avoidance behavior, depending on its substrates. The odorant receptor repertoire encodes a large collection of odor stimuli that vary widely in identity, intensity, and duration. May form a complex with Orco to form odorant-sensing units, providing sensitive and prolonged odorant signaling and calcium permeability. This Drosophila melanogaster (Fruit fly) protein is Odorant receptor 43b (Or43b).